A 203-amino-acid polypeptide reads, in one-letter code: Endo-type membrane-bound lytic murein transglycosylase A (203 aa).

The N-terminal stretch at 1–15 (MKLRWFAFLVVLLAG) is a signal peptide. Cys-16 is lipidated: N-palmitoyl cysteine. Cys-16 carries the S-diacylglycerol cysteine lipid modification.

It belongs to the transglycosylase Slt family.

It localises to the cell outer membrane. It carries out the reaction Endolytic cleavage of the (1-&gt;4)-beta-glycosidic linkage between N-acetylmuramic acid (MurNAc) and N-acetylglucosamine (GlcNAc) residues in peptidoglycan with concomitant formation of a 1,6-anhydrobond in the MurNAc residue.. Functionally, murein-degrading enzyme. May play a role in recycling of muropeptides during cell elongation and/or cell division. Preferentially cleaves at a distance of more than two disaccharide units from the ends of the glycan chain. The chain is Endo-type membrane-bound lytic murein transglycosylase A from Citrobacter koseri (strain ATCC BAA-895 / CDC 4225-83 / SGSC4696).